The primary structure comprises 2278 residues: Protein Ycf2 (2278 aa).

1632–1639 (GSIGTGRS) lines the ATP pocket.

The protein belongs to the Ycf2 family.

It localises to the plastid. The protein resides in the chloroplast stroma. Its function is as follows. Probable ATPase of unknown function. Its presence in a non-photosynthetic plant (Epifagus virginiana) and experiments in tobacco indicate that it has an essential function which is probably not related to photosynthesis. In Solanum tuberosum (Potato), this protein is Protein Ycf2.